The primary structure comprises 370 residues: Cobalt-precorrin-5B C(1)-methyltransferase (370 aa).

Belongs to the CbiD family.

The catalysed reaction is Co-precorrin-5B + S-adenosyl-L-methionine = Co-precorrin-6A + S-adenosyl-L-homocysteine. It participates in cofactor biosynthesis; adenosylcobalamin biosynthesis; cob(II)yrinate a,c-diamide from sirohydrochlorin (anaerobic route): step 6/10. Catalyzes the methylation of C-1 in cobalt-precorrin-5B to form cobalt-precorrin-6A. The polypeptide is Cobalt-precorrin-5B C(1)-methyltransferase (Nostoc sp. (strain PCC 7120 / SAG 25.82 / UTEX 2576)).